The chain runs to 140 residues: Putative membrane protein ORF7 (140 aa).

Residues 44 to 60 (TCAVSFFALFMLIIWVL) form a helical membrane-spanning segment. The segment at 66 to 118 (PEGSTTRGTDAHTQTEGSTTRGTDAHTQTEGSRDQGSMTPEADDLTRPPLGHG) is disordered. The segment covering 68–103 (GSTTRGTDAHTQTEGSTTRGTDAHTQTEGSRDQGSM) has biased composition (polar residues).

It is found in the membrane. This is Putative membrane protein ORF7 (ORF7) from Ictalurid herpesvirus 1 (strain Auburn) (IcHV-1).